The chain runs to 490 residues: Colicin-10 (490 aa).

Positions 1 to 20 (MDKVTDNSPDVESTESTEGS) are enriched in polar residues. Disordered stretches follow at residues 1-29 (MDKV…VDTG) and 146-171 (QKAR…EIAR). Residues 146–170 (QKAREEAEAAEKALREAERQRDEIA) are compositionally biased toward basic and acidic residues. Residues 447–467 (IVALMFSFIVGAPLGFWGIAI) traverse the membrane as a helical segment.

This sequence belongs to the channel forming colicin family.

The protein resides in the host membrane. This colicin is a channel-forming colicin. This class of transmembrane toxins depolarize the cytoplasmic membrane, leading to dissipation of cellular energy. Its function is as follows. Colicins are polypeptide toxins produced by and active against E.coli and closely related bacteria. The protein is Colicin-10 (cta) of Escherichia coli.